A 440-amino-acid chain; its full sequence is 3-phosphoshikimate 1-carboxyvinyltransferase (440 aa).

Positions 29 and 34 each coordinate 3-phosphoshikimate. Residue lysine 29 participates in phosphoenolpyruvate binding. Glycine 99 and arginine 128 together coordinate phosphoenolpyruvate. 3-phosphoshikimate is bound by residues serine 171, serine 172, glutamine 173, serine 199, aspartate 316, and lysine 343. Glutamine 173 lines the phosphoenolpyruvate pocket. Aspartate 316 acts as the Proton acceptor in catalysis. Residues arginine 347, arginine 390, and lysine 416 each contribute to the phosphoenolpyruvate site.

This sequence belongs to the EPSP synthase family. In terms of assembly, monomer.

Its subcellular location is the cytoplasm. It carries out the reaction 3-phosphoshikimate + phosphoenolpyruvate = 5-O-(1-carboxyvinyl)-3-phosphoshikimate + phosphate. The protein operates within metabolic intermediate biosynthesis; chorismate biosynthesis; chorismate from D-erythrose 4-phosphate and phosphoenolpyruvate: step 6/7. Catalyzes the transfer of the enolpyruvyl moiety of phosphoenolpyruvate (PEP) to the 5-hydroxyl of shikimate-3-phosphate (S3P) to produce enolpyruvyl shikimate-3-phosphate and inorganic phosphate. This Deinococcus geothermalis (strain DSM 11300 / CIP 105573 / AG-3a) protein is 3-phosphoshikimate 1-carboxyvinyltransferase.